The sequence spans 454 residues: Protein pid-2 (454 aa).

The segment at 31–61 is disordered; the sequence is VQNNQKEHPPVQEIKTVSSKSKEHRVSSSRK. Residues 50-61 show a composition bias toward basic and acidic residues; sequence KSKEHRVSSSRK.

May interact with pid-4, pid-5, app-1 and prmt-5. Expressed throughout the mitotic and meiotic regions of the germline and in oocytes.

The protein resides in the cytoplasm. It is found in the perinuclear region. The protein localises to the cytoplasmic granule. Involved in gene silencing mediated by a class of 21 nucleotide PIWI-interacting RNAs (piRNAs) that possess a uracil residue at the 5'-end (also called 21U-RNAs) and that guide the Piwi protein prg-1 to its DNA targets for silencing. Not required for the biogenesis of 21U-RNAs. May also be involved in gene silencing mediated by 22G-siRNAs (a class of 22 nucleotide endogenous small interfering RNAs (siRNAs) that possess a triphosphorylated guanine residue at the 5'-end) and 26G-siRNAs (a class of 26 nucleotide siRNAs that possess a guanine residue at the 5'-end). Required for the biogenesis of secondary and tertiary 22G-siRNAs from many loci. Specifically, promotes the production of 22G-siRNAs from the 5' end of target mRNAs. May play a role in the production of 26G-siRNAs. Plays a role in small RNA-directed transgenerational epigenetic inheritance (also called RNAe) over several generations and germline immortality. Together with the argonaut protein hrde-1, promotes the silencing of the DNA transposable element Tc1. Required for the formation of liquid-like condensates in the cytoplasm called Z granules, playing a role in maintaining their assembly, viscosity and morphology in adult germ cells, and localization in early embryos. In Caenorhabditis elegans, this protein is Protein pid-2.